The chain runs to 319 residues: Ribonucleoside-diphosphate reductase 2 subunit beta (319 aa).

3 residues coordinate Fe cation: Asp-67, Glu-98, and His-101. Residue Tyr-105 is part of the active site. Residues Glu-158, Glu-192, and His-195 each contribute to the Fe cation site.

Belongs to the ribonucleoside diphosphate reductase small chain family. Tetramer of two alpha and two beta subunits. Fe cation is required as a cofactor.

It catalyses the reaction a 2'-deoxyribonucleoside 5'-diphosphate + [thioredoxin]-disulfide + H2O = a ribonucleoside 5'-diphosphate + [thioredoxin]-dithiol. Its function is as follows. Provides the precursors necessary for DNA synthesis. Catalyzes the biosynthesis of deoxyribonucleotides from the corresponding ribonucleotides. R2F contains the tyrosyl radical required for catalysis. The chain is Ribonucleoside-diphosphate reductase 2 subunit beta (nrdF) from Salmonella typhimurium (strain LT2 / SGSC1412 / ATCC 700720).